A 910-amino-acid chain; its full sequence is Ubiquitin carboxyl-terminal hydrolase 9 (910 aa).

Residues 19–134 (TTPEEEKRIV…GGPPIERKLI (116 aa)) enclose the DUSP domain. The tract at residues 68 to 89 (ISGESSEASRPGPIDNHDIIES) is disordered. Residues 303-894 (AGLSNLGNTC…AAYVLFYRRV (592 aa)) enclose the USP domain. Cysteine 312 functions as the Nucleophile in the catalytic mechanism. Residue histidine 852 is the Proton acceptor of the active site.

It belongs to the peptidase C19 family.

The catalysed reaction is Thiol-dependent hydrolysis of ester, thioester, amide, peptide and isopeptide bonds formed by the C-terminal Gly of ubiquitin (a 76-residue protein attached to proteins as an intracellular targeting signal).. In terms of biological role, recognizes and hydrolyzes the peptide bond at the C-terminal Gly of ubiquitin. Involved in the processing of poly-ubiquitin precursors as well as that of ubiquitinated proteins. This chain is Ubiquitin carboxyl-terminal hydrolase 9 (UBP9), found in Arabidopsis thaliana (Mouse-ear cress).